The following is a 55-amino-acid chain: Large ribosomal subunit protein uL30 (55 aa).

It belongs to the universal ribosomal protein uL30 family. Part of the 50S ribosomal subunit.

Binds the 5S and 23S rRNAs. The chain is Large ribosomal subunit protein uL30 from Deinococcus radiodurans (strain ATCC 13939 / DSM 20539 / JCM 16871 / CCUG 27074 / LMG 4051 / NBRC 15346 / NCIMB 9279 / VKM B-1422 / R1).